A 190-amino-acid polypeptide reads, in one-letter code: dCTP deaminase, dUMP-forming (190 aa).

Residues 101 to 106 (KSSLGR), aspartate 119, 127 to 129 (TLE), glutamine 148, tyrosine 162, and glutamine 174 contribute to the dCTP site. Residue glutamate 129 is the Proton donor/acceptor of the active site. Residues 163–190 (GSTRVGSKYQGQRGPTPSRSYQNFITST) form a disordered region. The span at 171–190 (YQGQRGPTPSRSYQNFITST) shows a compositional bias: polar residues.

It belongs to the dCTP deaminase family. As to quaternary structure, homotrimer.

The enzyme catalyses dCTP + 2 H2O = dUMP + NH4(+) + diphosphate. Its pathway is pyrimidine metabolism; dUMP biosynthesis; dUMP from dCTP: step 1/1. In terms of biological role, bifunctional enzyme that catalyzes both the deamination of dCTP to dUTP and the hydrolysis of dUTP to dUMP without releasing the toxic dUTP intermediate. The polypeptide is dCTP deaminase, dUMP-forming (Mycobacterium avium (strain 104)).